The primary structure comprises 421 residues: Synaptotagmin-12 (421 aa).

The Vesicular segment spans residues 1-18; the sequence is MAVDVAEYHLSVIKSPPG. A helical membrane pass occupies residues 19-39; the sequence is WEVGVYAAGALALLGIAAVSL. Topologically, residues 40–421 are cytoplasmic; it reads WKLWTSGSFP…VSMWHAVRRN (382 aa). Phosphoserine is present on residues Ser97, Ser99, and Ser214. C2 domains follow at residues 152–272 and 283–416; these read TLGQ…SGWL and AVGE…SMWH.

The protein belongs to the synaptotagmin family. Homodimer. Can also form heterodimers. Interacts with SYT1. Post-translationally, phosphorylation of Ser-97 is required for mossy-fiber long-term potentiation.

Its subcellular location is the cytoplasmic vesicle. The protein localises to the secretory vesicle. The protein resides in the synaptic vesicle membrane. Functionally, synaptic vesicle phosphoprotein that enhances spontaneous neurotransmitter release but does not effect induced neurotransmitter release. Unlike other synaptotagmins, it does not bind Ca(2+) or phospholipids. Essential for mossy-fiber long-term potentiation in the hippocampus. In Homo sapiens (Human), this protein is Synaptotagmin-12 (SYT12).